The following is a 579-amino-acid chain: Adenine deaminase (579 aa).

This sequence belongs to the metallo-dependent hydrolases superfamily. Adenine deaminase family. The cofactor is Mn(2+).

It catalyses the reaction adenine + H2O + H(+) = hypoxanthine + NH4(+). This is Adenine deaminase from Listeria innocua serovar 6a (strain ATCC BAA-680 / CLIP 11262).